A 226-amino-acid chain; its full sequence is ATP synthase F(0) complex subunit a (226 aa).

6 consecutive transmembrane segments (helical) span residues phenylalanine 6–phenylalanine 26, tryptophan 68–leucine 88, glutamine 97–phenylalanine 117, isoleucine 138–valine 158, isoleucine 164–isoleucine 184, and isoleucine 195–threonine 215.

This sequence belongs to the ATPase A chain family. In terms of assembly, component of the ATP synthase complex composed at least of ATP5F1A/subunit alpha, ATP5F1B/subunit beta, ATP5MC1/subunit c (homooctomer), MT-ATP6/subunit a, MT-ATP8/subunit 8, ATP5ME/subunit e, ATP5MF/subunit f, ATP5MG/subunit g, ATP5MK/subunit k, ATP5MJ/subunit j, ATP5F1C/subunit gamma, ATP5F1D/subunit delta, ATP5F1E/subunit epsilon, ATP5PF/subunit F6, ATP5PB/subunit b, ATP5PD/subunit d, ATP5PO/subunit OSCP. ATP synthase complex consists of a soluble F(1) head domain (subunits alpha(3) and beta(3)) - the catalytic core - and a membrane F(0) domain - the membrane proton channel (subunits c, a, 8, e, f, g, k and j). These two domains are linked by a central stalk (subunits gamma, delta, and epsilon) rotating inside the F1 region and a stationary peripheral stalk (subunits F6, b, d, and OSCP). Interacts with DNAJC30; interaction is direct.

Its subcellular location is the mitochondrion inner membrane. It catalyses the reaction H(+)(in) = H(+)(out). Functionally, subunit a, of the mitochondrial membrane ATP synthase complex (F(1)F(0) ATP synthase or Complex V) that produces ATP from ADP in the presence of a proton gradient across the membrane which is generated by electron transport complexes of the respiratory chain. ATP synthase complex consist of a soluble F(1) head domain - the catalytic core - and a membrane F(1) domain - the membrane proton channel. These two domains are linked by a central stalk rotating inside the F(1) region and a stationary peripheral stalk. During catalysis, ATP synthesis in the catalytic domain of F(1) is coupled via a rotary mechanism of the central stalk subunits to proton translocation. With the subunit c (ATP5MC1), forms the proton-conducting channel in the F(0) domain, that contains two crucial half-channels (inlet and outlet) that facilitate proton movement from the mitochondrial intermembrane space (IMS) into the matrix. Protons are taken up via the inlet half-channel and released through the outlet half-channel, following a Grotthuss mechanism. This Didelphis virginiana (North American opossum) protein is ATP synthase F(0) complex subunit a.